The chain runs to 580 residues: Putative ankyrin repeat protein L63 (580 aa).

ANK repeat units follow at residues S81–I110, D111–A140, N141–A170, N172–A200, D202–K230, S314–A339, S340–C369, G370–S399, G400–A429, N431–A459, D461–A489, G490–A519, D521–A549, and N551–P579.

In Acanthamoeba polyphaga (Amoeba), this protein is Putative ankyrin repeat protein L63.